The following is a 146-amino-acid chain: Putative serine protease inhibitor SAV_2156 (146 aa).

Positions 1–26 (MTKTTMAVPGALLAAIALLSAAPAQA) are cleaved as a signal peptide. Intrachain disulfides connect cysteine 57-cysteine 70 and cysteine 90-cysteine 120.

The protein belongs to the protease inhibitor I16 (SSI) family.

It is found in the secreted. This Streptomyces avermitilis (strain ATCC 31267 / DSM 46492 / JCM 5070 / NBRC 14893 / NCIMB 12804 / NRRL 8165 / MA-4680) protein is Putative serine protease inhibitor SAV_2156.